Consider the following 326-residue polypeptide: Vacuolar protein sorting-associated protein 26A (326 aa).

This sequence belongs to the VPS26 family. Component of the heterotrimeric retromer cargo-selective complex (CSC) which is believed to associate with variable sorting nexins to form functionally distinct retromer complex variants.

Its subcellular location is the cytoplasm. It localises to the endosome membrane. It is found in the early endosome. Functionally, acts as a component of the retromer cargo-selective complex (CSC). The CSC is believed to be the core functional component of retromer or respective retromer complex variants acting to prevent missorting of selected transmembrane cargo proteins into the lysosomal degradation pathway. Retromer mediates retrograde transport of cargo proteins from endosomes to the trans-Golgi network (TGN). This chain is Vacuolar protein sorting-associated protein 26A (vps26a), found in Xenopus tropicalis (Western clawed frog).